A 424-amino-acid chain; its full sequence is UPF0597 protein Sputcn32_1209 (424 aa).

It belongs to the UPF0597 family.

The chain is UPF0597 protein Sputcn32_1209 from Shewanella putrefaciens (strain CN-32 / ATCC BAA-453).